Reading from the N-terminus, the 370-residue chain is G-protein coupled receptor homolog K2 (370 aa).

The Extracellular portion of the chain corresponds to Met-1 to His-61. N-linked (GlcNAc...) asparagine; by host glycans are attached at residues Asn-6 and Asn-51. A helical membrane pass occupies residues Ile-62–Ser-82. Residues Leu-83–Asp-94 are Cytoplasmic-facing. The chain crosses the membrane as a helical span at residues Ile-95 to Val-115. The Extracellular portion of the chain corresponds to Tyr-116–Ile-131. Residues Met-132–Ile-152 form a helical membrane-spanning segment. Residues Asp-153–Arg-171 are Cytoplasmic-facing. The helical transmembrane segment at Ile-172–Ser-192 threads the bilayer. The Extracellular segment spans residues Lys-193–Arg-223. Residues Leu-224–Cys-244 form a helical membrane-spanning segment. Residues Tyr-245–Lys-265 are Cytoplasmic-facing. The chain crosses the membrane as a helical span at residues Ile-266–Met-286. Residues Ile-287–Arg-300 lie on the Extracellular side of the membrane. The chain crosses the membrane as a helical span at residues His-301–Ala-321. Over Arg-322–Ile-370 the chain is Cytoplasmic.

It belongs to the G-protein coupled receptor 1 family.

The protein localises to the host cell membrane. Functionally, putative chemokine receptor. In Sus scrofa (Pig), this protein is G-protein coupled receptor homolog K2.